A 441-amino-acid chain; its full sequence is Probable membrane metalloprotease ARASP2, chloroplastic (441 aa).

Residues 1 to 84 (MLLNISSSPI…DFGSLESVLE (84 aa)) constitute a chloroplast transit peptide. Residue histidine 96 coordinates Zn(2+). Glutamate 97 is a catalytic residue. Histidine 100 lines the Zn(2+) pocket. The helical transmembrane segment at 171 to 191 (VIVVSAGIVANVIFAYAIIFT) threads the bilayer. A PDZ domain is found at 196–249 (VGLPVQESFPGVLVPDVKSFSAASRDGLLPGDVILAVDGTELSNSGSDSVSKVV). 2 helical membrane passes run 373 to 393 (LAVI…ALIL) and 407 to 427 (VEQG…LFLI).

The protein belongs to the peptidase M50A family. The cofactor is Zn(2+).

It is found in the plastid. Its subcellular location is the chloroplast inner membrane. Metalloprotease essential for chloroplast and plant development. May be involved in regulated intramembrane proteolysis (RIP). In Arabidopsis thaliana (Mouse-ear cress), this protein is Probable membrane metalloprotease ARASP2, chloroplastic.